We begin with the raw amino-acid sequence, 244 residues long: MDWRADGILLAVRRHGEASAIIELFTADQGCHLGVVRGGASRKMAPLLQVGAQLDATWRARLSDHIGSYTVELVKGRAAEVMEDRVALAGLSSVCALLSFSLPERAAYPGLFARTLAVLDGLGAERWAEAYLGWEMALLTEMGFGLDLSQCAATGVTQDLAFISPRTGRAVSRAAAGEWADRLLPLSPALEGMARGPEDILAGLAVTGHFLATHLAPSLGDKPLPAARQRLIDALERQVIRGGS.

It belongs to the RecO family.

Involved in DNA repair and RecF pathway recombination. In Jannaschia sp. (strain CCS1), this protein is DNA repair protein RecO.